The following is a 340-amino-acid chain: GTP 3',8-cyclase (340 aa).

Residues 8 to 229 (KLGRPIRDLR…IEQHFEISPV (222 aa)) enclose the Radical SAM core domain. A GTP-binding site is contributed by R17. Residues C24 and C28 each coordinate [4Fe-4S] cluster. Position 30 (Y30) interacts with S-adenosyl-L-methionine. Residue C31 participates in [4Fe-4S] cluster binding. Residue R71 participates in GTP binding. S-adenosyl-L-methionine is bound at residue G75. T102 is a GTP binding site. S126 is a binding site for S-adenosyl-L-methionine. K163 is a binding site for GTP. S-adenosyl-L-methionine is bound at residue M197. 2 residues coordinate [4Fe-4S] cluster: C261 and C264. 266-268 (RAR) is a GTP binding site. C278 serves as a coordination point for [4Fe-4S] cluster.

Belongs to the radical SAM superfamily. MoaA family. In terms of assembly, monomer and homodimer. [4Fe-4S] cluster serves as cofactor.

It carries out the reaction GTP + AH2 + S-adenosyl-L-methionine = (8S)-3',8-cyclo-7,8-dihydroguanosine 5'-triphosphate + 5'-deoxyadenosine + L-methionine + A + H(+). Its pathway is cofactor biosynthesis; molybdopterin biosynthesis. Its function is as follows. Catalyzes the cyclization of GTP to (8S)-3',8-cyclo-7,8-dihydroguanosine 5'-triphosphate. In Staphylococcus epidermidis (strain ATCC 35984 / DSM 28319 / BCRC 17069 / CCUG 31568 / BM 3577 / RP62A), this protein is GTP 3',8-cyclase.